Here is a 353-residue protein sequence, read N- to C-terminus: Probable protein phosphatase 2C 48 (353 aa).

Residues 54–348 (FAAVCSRRGE…DDCSAICLFF (295 aa)) form the PPM-type phosphatase domain. D90, G91, D293, and D339 together coordinate Mn(2+).

This sequence belongs to the PP2C family. Mg(2+) serves as cofactor. It depends on Mn(2+) as a cofactor.

It catalyses the reaction O-phospho-L-seryl-[protein] + H2O = L-seryl-[protein] + phosphate. The enzyme catalyses O-phospho-L-threonyl-[protein] + H2O = L-threonyl-[protein] + phosphate. This chain is Probable protein phosphatase 2C 48, found in Oryza sativa subsp. japonica (Rice).